Here is a 417-residue protein sequence, read N- to C-terminus: Gamma-glutamyl phosphate reductase (417 aa).

It belongs to the gamma-glutamyl phosphate reductase family.

It localises to the cytoplasm. It catalyses the reaction L-glutamate 5-semialdehyde + phosphate + NADP(+) = L-glutamyl 5-phosphate + NADPH + H(+). Its pathway is amino-acid biosynthesis; L-proline biosynthesis; L-glutamate 5-semialdehyde from L-glutamate: step 2/2. Its function is as follows. Catalyzes the NADPH-dependent reduction of L-glutamate 5-phosphate into L-glutamate 5-semialdehyde and phosphate. The product spontaneously undergoes cyclization to form 1-pyrroline-5-carboxylate. The sequence is that of Gamma-glutamyl phosphate reductase from Erwinia tasmaniensis (strain DSM 17950 / CFBP 7177 / CIP 109463 / NCPPB 4357 / Et1/99).